The chain runs to 336 residues: Phosphate acyltransferase (336 aa).

Belongs to the PlsX family. In terms of assembly, homodimer. Probably interacts with PlsY.

It localises to the cytoplasm. It catalyses the reaction a fatty acyl-[ACP] + phosphate = an acyl phosphate + holo-[ACP]. It functions in the pathway lipid metabolism; phospholipid metabolism. Catalyzes the reversible formation of acyl-phosphate (acyl-PO(4)) from acyl-[acyl-carrier-protein] (acyl-ACP). This enzyme utilizes acyl-ACP as fatty acyl donor, but not acyl-CoA. The polypeptide is Phosphate acyltransferase (Dictyoglomus thermophilum (strain ATCC 35947 / DSM 3960 / H-6-12)).